The chain runs to 374 residues: Putative F-box protein At5g60060 (374 aa).

In terms of domain architecture, F-box spans S9–K61.

The protein is Putative F-box protein At5g60060 of Arabidopsis thaliana (Mouse-ear cress).